The following is a 355-amino-acid chain: MNTFGKKLTLTSFGESHGVAIGGVIDGLPAGLKIDADFIQSELDKRRPGQSSFTTARDEADKIEIFSGVFDGMSTGAPIGFAIFNNNQKSNDYENLREIFRPGHADLTYFKKYGIRDHRGGGRASARETAVRVAGGAFAQLLLNELKIEVLSGVLGIGKVVSDKIDFDFAQNSQIYALGNEEAMKEAVNKARSEHDSVGAVVLSVARGVPAGLGEPLYDRLDSALAAALMGINGVKAVEIGAGVNVSSMLGSANNDEMDELGFLSNNAGGILGGISSGAEIVLKSHFKPTPSIFKEQKTLNLAGEAVDFELRGRHDPCIGIRGSVVATAMIRLVLADMLLLNASTKLENLKKIYG.

Arg-46 is an NADP(+) binding site. Residues 123–125 (RAS), 233–234 (NG), Gly-273, 288–292 (KPTPS), and Arg-314 contribute to the FMN site.

This sequence belongs to the chorismate synthase family. Homotetramer. FMNH2 is required as a cofactor.

The enzyme catalyses 5-O-(1-carboxyvinyl)-3-phosphoshikimate = chorismate + phosphate. Its pathway is metabolic intermediate biosynthesis; chorismate biosynthesis; chorismate from D-erythrose 4-phosphate and phosphoenolpyruvate: step 7/7. Its function is as follows. Catalyzes the anti-1,4-elimination of the C-3 phosphate and the C-6 proR hydrogen from 5-enolpyruvylshikimate-3-phosphate (EPSP) to yield chorismate, which is the branch point compound that serves as the starting substrate for the three terminal pathways of aromatic amino acid biosynthesis. This reaction introduces a second double bond into the aromatic ring system. In Campylobacter concisus (strain 13826), this protein is Chorismate synthase.